The chain runs to 486 residues: 3-sulfolactaldehyde dehydrogenase (486 aa).

NADP(+)-binding positions include W157–N158, R181–S184, and G234–S235. Residue E256 is the Proton acceptor of the active site. L257 provides a ligand contact to NADP(+). The Nucleophile role is filled by C290. Residue E387 coordinates NADP(+).

It belongs to the aldehyde dehydrogenase family.

It carries out the reaction (2S)-3-sulfolactaldehyde + NADP(+) + H2O = (2S)-3-sulfolactate + NADPH + 2 H(+). The enzyme catalyses (2S)-3-sulfolactaldehyde + NAD(+) + H2O = (2S)-3-sulfolactate + NADH + 2 H(+). Catalyzes the oxidation of (2S)-3-sulfolactaldehyde to (2S)-3-sulfolactate, using both NAD(+) and NADP(+) as electron acceptors. Is involved in a degradation pathway of sulfoquinovose (SQ) that allows P.putida SQ1 to use SQ as the sole carbon and energy source for growth. In Pseudomonas putida (Arthrobacter siderocapsulatus), this protein is 3-sulfolactaldehyde dehydrogenase.